The chain runs to 160 residues: UPF0262 protein BCAN_A0255 (160 aa).

This sequence belongs to the UPF0262 family.

This Brucella canis (strain ATCC 23365 / NCTC 10854 / RM-666) protein is UPF0262 protein BCAN_A0255.